Here is a 205-residue protein sequence, read N- to C-terminus: Probable nicotinate-nucleotide adenylyltransferase (205 aa).

Belongs to the NadD family.

The catalysed reaction is nicotinate beta-D-ribonucleotide + ATP + H(+) = deamido-NAD(+) + diphosphate. Its pathway is cofactor biosynthesis; NAD(+) biosynthesis; deamido-NAD(+) from nicotinate D-ribonucleotide: step 1/1. Catalyzes the reversible adenylation of nicotinate mononucleotide (NaMN) to nicotinic acid adenine dinucleotide (NaAD). The chain is Probable nicotinate-nucleotide adenylyltransferase from Arthrobacter sp. (strain FB24).